A 274-amino-acid polypeptide reads, in one-letter code: NH(3)-dependent NAD(+) synthetase (274 aa).

46 to 53 (GISGGQDS) provides a ligand contact to ATP. D52 contacts Mg(2+). R140 lines the deamido-NAD(+) pocket. T160 lines the ATP pocket. E165 is a binding site for Mg(2+). Deamido-NAD(+) contacts are provided by K173 and D180. ATP is bound by residues K189 and T211. 260 to 261 (HK) provides a ligand contact to deamido-NAD(+).

This sequence belongs to the NAD synthetase family. Homodimer.

The catalysed reaction is deamido-NAD(+) + NH4(+) + ATP = AMP + diphosphate + NAD(+) + H(+). It functions in the pathway cofactor biosynthesis; NAD(+) biosynthesis; NAD(+) from deamido-NAD(+) (ammonia route): step 1/1. Its function is as follows. Catalyzes the ATP-dependent amidation of deamido-NAD to form NAD. Uses ammonia as a nitrogen source. The sequence is that of NH(3)-dependent NAD(+) synthetase from Listeria monocytogenes serotype 4b (strain CLIP80459).